Reading from the N-terminus, the 436-residue chain is Voltage-gated potassium channel regulatory subunit KCNG3 (436 aa).

At 1-168 (MTFGRSGAAS…RTFEEPTSSL (168 aa)) the chain is on the cytoplasmic side. Residues 169 to 190 (AAQILASVSVVFVIVSMVVLCA) traverse the membrane as a helical segment. The Extracellular segment spans residues 191–220 (STLPDWRNAAADNRSLDDRSRYSAGPGREP). A helical transmembrane segment spans residues 221–242 (SGIIEAICIGWFTAECIVRFIV). Topologically, residues 243 to 253 (SKNKCEFVKRP) are cytoplasmic. The chain crosses the membrane as a helical span at residues 254 to 274 (LNIIDLLAITPYYISVLMTVF). Residues 275 to 284 (TGENSQLQRA) are Extracellular-facing. A helical; Voltage-sensor transmembrane segment spans residues 285–305 (GVTLRVLRMMRIFWVIKLARH). The Cytoplasmic segment spans residues 306 to 320 (FIGLQTLGLTLKRCY). A helical transmembrane segment spans residues 321–342 (REMVMLLVFICVAMAIFSALSQ). The Extracellular segment spans residues 343–360 (LLEHGLDLETSNKDFTSI). Residues 361–372 (PAACWWVIISMT) constitute an intramembrane region (helical). A Selectivity filter motif is present at residues 373-378 (TVGYGD). The stretch at 373 to 380 (TVGYGDMY) is an intramembrane region. The Extracellular segment spans residues 381-387 (PITVPGR). A helical transmembrane segment spans residues 388–416 (ILGGVCVVSGIVLLALPITFIYHSFVQCY). Residues 417-436 (HELKFRSARYSRSLSTEFLN) are Cytoplasmic-facing.

This sequence belongs to the potassium channel family. G (TC 1.A.1.2) subfamily. Kv6.3/KCNG3 sub-subfamily. Heterotetramer with KCNB1. Does not form homomultimers. Expressed in the brain, liver, testis, small intestine, colon, thymus and adrenal gland.

Its subcellular location is the cell membrane. It localises to the cytoplasm. Regulatory subunit of the voltage-gated potassium (Kv) channel which, when coassembled with KCNB1, modulates the kinetics parameters of the heterotetrameric channel namely the inactivation and deactivation rate. Potassium channel subunit that does not form functional channels by itself. Reduces the deactivation rate. Moderately accelerates activation. The protein is Voltage-gated potassium channel regulatory subunit KCNG3 of Homo sapiens (Human).